The primary structure comprises 607 residues: Granule-bound starch synthase 1, chloroplastic/amyloplastic (607 aa).

The transit peptide at 1 to 77 (MASITASHHF…RPGCSATIVC (77 aa)) directs the protein to the chloroplast. Lys95 provides a ligand contact to ADP-alpha-D-glucose. Residues 585-607 (SGSEPGVEGEEIAPLAKENVATP) form a disordered region.

Belongs to the glycosyltransferase 1 family. Bacterial/plant glycogen synthase subfamily.

The protein resides in the plastid. The protein localises to the chloroplast. It is found in the amyloplast. It carries out the reaction an NDP-alpha-D-glucose + [(1-&gt;4)-alpha-D-glucosyl](n) = [(1-&gt;4)-alpha-D-glucosyl](n+1) + a ribonucleoside 5'-diphosphate + H(+). It participates in glycan biosynthesis; starch biosynthesis. This Solanum tuberosum (Potato) protein is Granule-bound starch synthase 1, chloroplastic/amyloplastic (WAXY).